Here is a 1083-residue protein sequence, read N- to C-terminus: Solute carrier family 12 member 7 (1083 aa).

The interval 1–51 (MPTNFTVVPVEARADGAGDEAAERTEEPGSPESADPACPTPGDGNPRENSP) is disordered. Over 1–119 (MPTNFTVVPV…RREIKAPRMG (119 aa)) the chain is Cytoplasmic. Residues 12–27 (ARADGAGDEAAERTEE) show a composition bias toward basic and acidic residues. Residues Ser30, Ser33, Ser50, and Ser62 each carry the phosphoserine modification. A discontinuously helical transmembrane segment spans residues 120–142 (TFIGVYLPCLQNILGVILFLRLT). K(+) contacts are provided by Asn131 and Ile132. Residue Val135 participates in chloride binding. Topologically, residues 143-149 (WIVGAAG) are extracellular. The helical transmembrane segment at 150-172 (VLESFLIVAMCCTCTMLTAISMS) threads the bilayer. Over 173-196 (AIATNGVVPAGGSYYMISRSLGPE) the chain is Cytoplasmic. The chain crosses the membrane as a helical span at residues 197–225 (FGGAVGLCFYLGTTFAGAMYILGTIEIFL). At 226 to 249 (TYISPSAAIFQAETADGEAAALLN) the chain is on the extracellular side. Transmembrane regions (helical) follow at residues 250-271 (NMRV…VGVK) and 272-300 (YVNK…KTAF). Over 301–419 (APPDIPVCLL…PYVLTDIMTY (119 aa)) the chain is Extracellular. Residues Asn312, Asn331, and Asn360 are each glycosylated (N-linked (GlcNAc...) asparagine). A helical transmembrane segment spans residues 420-440 (FTMLVGIYFPSVTGIMAGSNR). The K(+) site is built by Pro429 and Thr432. Residue Pro429 participates in chloride binding. Gly433 and Ile434 together coordinate chloride. The Cytoplasmic portion of the chain corresponds to 441 to 450 (SGDLKDAQKS). Residues 451–473 (IPTGTILAIVTTSFIYLSCIVLF) form a helical membrane-spanning segment. Residues 474-504 (GACIEGVVLRDKFGEALQGNLVIGMLAWPSP) lie on the Extracellular side of the membrane. The helical transmembrane segment at 505 to 531 (WVIVIGSFFSTCGAGLQSLTGAPRLLQ) threads the bilayer. The Cytoplasmic segment spans residues 532–554 (AIARDGIIPFLQVFGHGKANGEP). The next 2 membrane-spanning stretches (helical) occupy residues 555–573 (TWAL…LIAS) and 574–598 (LDSV…ACAV). Position 589 (Tyr589) interacts with chloride. The Cytoplasmic segment spans residues 599-612 (QTLLRTPNWRPRFK). Transmembrane regions (helical) follow at residues 613–635 (FYHW…ICSW) and 636–651 (YYAL…IYKY). Topologically, residues 652 to 1083 (IEYRGAEKEW…GGREVITIYS (432 aa)) are cytoplasmic. Residues 664 to 680 (GIRGLSLNAARYALLRV) form a scissor helix region. Thr973 and Thr980 each carry phosphothreonine.

This sequence belongs to the SLC12A transporter family. K/Cl co-transporter subfamily. In terms of assembly, homodimer; adopts a domain-swap conformation at the scissor helices connecting the transmembrane domain and C-terminal domain. Heterodimer with K-Cl cotransporter SLC12A5. As to expression, widely expressed with highest levels in kidney, liver and pancreas. Expressed in choroid plexus and suprachiasmatic nucleus.

Its subcellular location is the cell membrane. The enzyme catalyses K(+)(in) + chloride(in) = K(+)(out) + chloride(out). With respect to regulation, activated by N-ethylmaleimide (NEM). Inhibited by furosemide, DIDS and bumetanide. The inhibition is much stronger in the presence of 50 mM K(+) in the uptake medium. Inhibited by DIOA. Inhibited by WNK3. Functionally, mediates electroneutral potassium-chloride cotransport when activated by cell swelling. May mediate K(+) uptake into Deiters' cells in the cochlea and contribute to K(+) recycling in the inner ear. Important for the survival of cochlear outer and inner hair cells and the maintenance of the organ of Corti. May be required for basolateral Cl(-) extrusion in the kidney and contribute to renal acidification. In Rattus norvegicus (Rat), this protein is Solute carrier family 12 member 7.